The following is a 342-amino-acid chain: Fructose-1,6-bisphosphatase class 1 (342 aa).

The Mg(2+) site is built by E97, D119, L121, and D122. Substrate is bound by residues 122–125 (DGSS), N215, Y247, and K280. Residue E286 participates in Mg(2+) binding.

Belongs to the FBPase class 1 family. In terms of assembly, homotetramer. Requires Mg(2+) as cofactor.

It localises to the cytoplasm. It carries out the reaction beta-D-fructose 1,6-bisphosphate + H2O = beta-D-fructose 6-phosphate + phosphate. It functions in the pathway carbohydrate biosynthesis; gluconeogenesis. In Leptospira interrogans serogroup Icterohaemorrhagiae serovar copenhageni (strain Fiocruz L1-130), this protein is Fructose-1,6-bisphosphatase class 1.